Here is a 304-residue protein sequence, read N- to C-terminus: Acetylglutamate kinase (304 aa).

Substrate is bound by residues 64–65 (GG), Arg-86, and Asn-181.

It belongs to the acetylglutamate kinase family. ArgB subfamily.

It localises to the plastid. It is found in the chloroplast. It catalyses the reaction N-acetyl-L-glutamate + ATP = N-acetyl-L-glutamyl 5-phosphate + ADP. It functions in the pathway amino-acid biosynthesis; L-arginine biosynthesis; N(2)-acetyl-L-ornithine from L-glutamate: step 2/4. Its function is as follows. Catalyzes the ATP-dependent phosphorylation of N-acetyl-L-glutamate. This is Acetylglutamate kinase from Cyanidium caldarium (Red alga).